Consider the following 118-residue polypeptide: V-type proton ATPase subunit G 1 (118 aa).

Position 2 is an N-acetylalanine (alanine 2).

This sequence belongs to the V-ATPase G subunit family. As to quaternary structure, V-ATPase is a heteromultimeric enzyme made up of two complexes: the ATP-hydrolytic V1 complex and the proton translocation V0 complex. The V1 complex consists of three catalytic AB heterodimers that form a heterohexamer, three peripheral stalks each consisting of EG heterodimers, one central rotor including subunits D and F, and the regulatory subunits C and H. The proton translocation complex V0 consists of the proton transport subunit a, a ring of proteolipid subunits c9c'', rotary subunit d, subunits e and f, and the accessory subunits ATP6AP1/Ac45 and ATP6AP2/PRR. In terms of tissue distribution, kidney; localizes to early distal nephron, encompassing thick ascending limbs and distal convoluted tubules (at protein level). Ubiquitous.

The protein resides in the apical cell membrane. In terms of biological role, subunit of the V1 complex of vacuolar(H+)-ATPase (V-ATPase), a multisubunit enzyme composed of a peripheral complex (V1) that hydrolyzes ATP and a membrane integral complex (V0) that translocates protons. V-ATPase is responsible for acidifying and maintaining the pH of intracellular compartments and in some cell types, is targeted to the plasma membrane, where it is responsible for acidifying the extracellular environment. In aerobic conditions, involved in intracellular iron homeostasis, thus triggering the activity of Fe(2+) prolyl hydroxylase (PHD) enzymes, and leading to HIF1A hydroxylation and subsequent proteasomal degradation. This Homo sapiens (Human) protein is V-type proton ATPase subunit G 1 (ATP6V1G1).